The sequence spans 154 residues: Deoxyuridine 5'-triphosphate nucleotidohydrolase (154 aa).

Residues 64–66, Asn77, 81–83, and Lys91 contribute to the substrate site; these read RSG and TID.

Belongs to the dUTPase family. As to quaternary structure, homotrimer. Mg(2+) serves as cofactor.

The enzyme catalyses dUTP + H2O = dUMP + diphosphate + H(+). It functions in the pathway pyrimidine metabolism; dUMP biosynthesis; dUMP from dCTP (dUTP route): step 2/2. This enzyme is involved in nucleotide metabolism: it produces dUMP, the immediate precursor of thymidine nucleotides and it decreases the intracellular concentration of dUTP so that uracil cannot be incorporated into DNA. This is Deoxyuridine 5'-triphosphate nucleotidohydrolase from Mycobacterium avium (strain 104).